The chain runs to 71 residues: Gas vesicle protein A (71 aa).

It belongs to the gas vesicle GvpA family. As to quaternary structure, the gas vesicle shell is 2 nm thick and consists of a single layer of this protein. It forms helical ribs nearly perpendicular to the long axis of the vesicle.

It is found in the gas vesicle shell. Its function is as follows. Gas vesicles are hollow, gas filled proteinaceous nanostructures found in some microorganisms. During planktonic growth they allow positioning of the organism at a favorable depth for light or nutrient acquisition. GvpA forms the protein shell. Functionally, cluster expression in E.coli (gvpA1-gvpA2-gvpC-gvpN-gvpJ-gvpK-gvpF-gvpG-gvpV-gvpW) allows cells to float and produces irregularly shaped gas vesicles. This is Gas vesicle protein A from Nostoc sp. (strain PCC 7120 / SAG 25.82 / UTEX 2576).